Here is a 179-residue protein sequence, read N- to C-terminus: Large ribosomal subunit protein uL6 (179 aa).

Belongs to the universal ribosomal protein uL6 family. In terms of assembly, part of the 50S ribosomal subunit.

Its function is as follows. This protein binds to the 23S rRNA, and is important in its secondary structure. It is located near the subunit interface in the base of the L7/L12 stalk, and near the tRNA binding site of the peptidyltransferase center. This Pseudomonas savastanoi pv. phaseolicola (strain 1448A / Race 6) (Pseudomonas syringae pv. phaseolicola (strain 1448A / Race 6)) protein is Large ribosomal subunit protein uL6.